The primary structure comprises 353 residues: Photosystem II D2 protein (353 aa).

Position 2 is an N-acetylthreonine (Thr-2). Thr-2 bears the Phosphothreonine mark. A helical transmembrane segment spans residues 41-61 (CAYFALGGWFTGTTFVTSWYT). Residue His-118 participates in chlorophyll a binding. The chain crosses the membrane as a helical span at residues 125–141 (GFMLRQFELARSVQLRP). Pheophytin a is bound by residues Gln-130 and Asn-143. The helical transmembrane segment at 153-166 (VFVSVFLIYPLGQS) threads the bilayer. His-198 lines the chlorophyll a pocket. The helical transmembrane segment at 208 to 228 (AALLCAIHGATVENTLFEDGD) threads the bilayer. A plastoquinone contacts are provided by His-215 and Phe-262. Fe cation is bound at residue His-215. His-269 serves as a coordination point for Fe cation. A helical transmembrane segment spans residues 279 to 295 (GLWMSALGVVGLALNLR).

The protein belongs to the reaction center PufL/M/PsbA/D family. PSII is composed of 1 copy each of membrane proteins PsbA, PsbB, PsbC, PsbD, PsbE, PsbF, PsbH, PsbI, PsbJ, PsbK, PsbL, PsbM, PsbT, PsbX, PsbY, PsbZ, Psb30/Ycf12, at least 3 peripheral proteins of the oxygen-evolving complex and a large number of cofactors. It forms dimeric complexes. Requires The D1/D2 heterodimer binds P680, chlorophylls that are the primary electron donor of PSII, and subsequent electron acceptors. It shares a non-heme iron and each subunit binds pheophytin, quinone, additional chlorophylls, carotenoids and lipids. There is also a Cl(-1) ion associated with D1 and D2, which is required for oxygen evolution. The PSII complex binds additional chlorophylls, carotenoids and specific lipids. as cofactor.

The protein localises to the plastid. The protein resides in the chloroplast thylakoid membrane. It catalyses the reaction 2 a plastoquinone + 4 hnu + 2 H2O = 2 a plastoquinol + O2. Its function is as follows. Photosystem II (PSII) is a light-driven water:plastoquinone oxidoreductase that uses light energy to abstract electrons from H(2)O, generating O(2) and a proton gradient subsequently used for ATP formation. It consists of a core antenna complex that captures photons, and an electron transfer chain that converts photonic excitation into a charge separation. The D1/D2 (PsbA/PsbD) reaction center heterodimer binds P680, the primary electron donor of PSII as well as several subsequent electron acceptors. D2 is needed for assembly of a stable PSII complex. In Spinacia oleracea (Spinach), this protein is Photosystem II D2 protein.